The primary structure comprises 371 residues: 3-dehydroquinate synthase (371 aa).

NAD(+) is bound by residues 72 to 77 (DGEEHK), 106 to 110 (GVVGD), 130 to 131 (TT), Lys-143, Lys-152, and 170 to 173 (TLKT). 3 residues coordinate Zn(2+): Glu-185, His-248, and His-265.

This sequence belongs to the sugar phosphate cyclases superfamily. Dehydroquinate synthase family. The cofactor is Co(2+). Zn(2+) is required as a cofactor. It depends on NAD(+) as a cofactor.

It is found in the cytoplasm. The catalysed reaction is 7-phospho-2-dehydro-3-deoxy-D-arabino-heptonate = 3-dehydroquinate + phosphate. The protein operates within metabolic intermediate biosynthesis; chorismate biosynthesis; chorismate from D-erythrose 4-phosphate and phosphoenolpyruvate: step 2/7. Catalyzes the conversion of 3-deoxy-D-arabino-heptulosonate 7-phosphate (DAHP) to dehydroquinate (DHQ). This Pelotomaculum thermopropionicum (strain DSM 13744 / JCM 10971 / SI) protein is 3-dehydroquinate synthase.